Reading from the N-terminus, the 67-residue chain is DNA-directed RNA polymerase subunit omega (67 aa).

It belongs to the RNA polymerase subunit omega family. The RNAP catalytic core consists of 2 alpha, 1 beta, 1 beta' and 1 omega subunit. When a sigma factor is associated with the core the holoenzyme is formed, which can initiate transcription.

The catalysed reaction is RNA(n) + a ribonucleoside 5'-triphosphate = RNA(n+1) + diphosphate. In terms of biological role, promotes RNA polymerase assembly. Latches the N- and C-terminal regions of the beta' subunit thereby facilitating its interaction with the beta and alpha subunits. This Exiguobacterium sibiricum (strain DSM 17290 / CCUG 55495 / CIP 109462 / JCM 13490 / 255-15) protein is DNA-directed RNA polymerase subunit omega.